A 538-amino-acid chain; its full sequence is Nicotinate phosphoribosyltransferase (538 aa).

Residues Y21 and T210 each contribute to the nicotinate site. H213 is subject to Phosphohistidine. Nicotinate is bound at residue R318. A 5-phospho-alpha-D-ribose 1-diphosphate-binding site is contributed by T380. A Phosphoserine modification is found at S537.

It belongs to the NAPRTase family. In terms of assembly, homodimer. Requires Mg(2+) as cofactor. It depends on Mn(2+) as a cofactor. Post-translationally, transiently phosphorylated on a His residue during the reaction cycle. Phosphorylation strongly increases the affinity for substrates and increases the rate of nicotinate D-ribonucleotide production. Dephosphorylation regenerates the low-affinity form of the enzyme, leading to product release.

It localises to the cytoplasm. The protein resides in the cytosol. It carries out the reaction nicotinate + 5-phospho-alpha-D-ribose 1-diphosphate + ATP + H2O = nicotinate beta-D-ribonucleotide + ADP + phosphate + diphosphate. It functions in the pathway cofactor biosynthesis; NAD(+) biosynthesis; nicotinate D-ribonucleotide from nicotinate: step 1/1. In terms of biological role, catalyzes the first step in the biosynthesis of NAD from nicotinic acid, the ATP-dependent synthesis of beta-nicotinate D-ribonucleotide from nicotinate and 5-phospho-D-ribose 1-phosphate. Helps prevent cellular oxidative stress via its role in NAD biosynthesis. The sequence is that of Nicotinate phosphoribosyltransferase (NAPRT) from Homo sapiens (Human).